The sequence spans 342 residues: Galactose mutarotase (342 aa).

Ala-2 carries the N-acetylalanine modification. Residue Ser-14 is modified to Phosphoserine. Residues 81-82 (NR) and His-107 contribute to the beta-D-galactose site. Ser-124 bears the Phosphoserine mark. Catalysis depends on His-176, which acts as the Proton donor. Residues 176 to 178 (HSY), Asp-243, Gln-279, and Glu-307 each bind beta-D-galactose. Glu-307 serves as the catalytic Proton acceptor.

This sequence belongs to the aldose epimerase family. In terms of assembly, monomer.

The protein resides in the cytoplasm. The enzyme catalyses alpha-D-galactose = beta-D-galactose. It catalyses the reaction alpha-D-glucose = beta-D-glucose. Its pathway is carbohydrate metabolism; hexose metabolism. It functions in the pathway carbohydrate metabolism; galactose metabolism. In terms of biological role, mutarotase that catalyzes the interconversion of beta-D-galactose and alpha-D-galactose during galactose metabolism. Beta-D-galactose is metabolized in the liver into glucose 1-phosphate, the primary metabolic fuel, by the action of four enzymes that constitute the Leloir pathway: GALM, GALK1 (galactokinase), GALT (galactose-1-phosphate uridylyltransferase) and GALE (UDP-galactose-4'-epimerase). Involved in the maintenance of the equilibrium between the beta- and alpha-anomers of galactose, therefore ensuring a sufficient supply of the alpha-anomer for GALK1. Also active on D-glucose although shows a preference for galactose over glucose. This chain is Galactose mutarotase (GALM), found in Pongo abelii (Sumatran orangutan).